A 154-amino-acid polypeptide reads, in one-letter code: NADPH-dependent 7-cyano-7-deazaguanine reductase (154 aa).

Residues 1–11 (MAKKPVKDLKQ) show a composition bias toward basic and acidic residues. Positions 1 to 31 (MAKKPVKDLKQLGHATPVPASPEEATLERVP) are disordered. Catalysis depends on Cys52, which acts as the Thioimide intermediate. The Proton donor role is filled by Asp59. Substrate-binding positions include 74–76 (IES) and 93–94 (HE).

The protein belongs to the GTP cyclohydrolase I family. QueF type 1 subfamily.

The protein resides in the cytoplasm. The enzyme catalyses 7-aminomethyl-7-carbaguanine + 2 NADP(+) = 7-cyano-7-deazaguanine + 2 NADPH + 3 H(+). The protein operates within tRNA modification; tRNA-queuosine biosynthesis. Functionally, catalyzes the NADPH-dependent reduction of 7-cyano-7-deazaguanine (preQ0) to 7-aminomethyl-7-deazaguanine (preQ1). In Parvibaculum lavamentivorans (strain DS-1 / DSM 13023 / NCIMB 13966), this protein is NADPH-dependent 7-cyano-7-deazaguanine reductase.